Here is a 290-residue protein sequence, read N- to C-terminus: MSAHLILIDALNLIRRVYAVQERPFIQIKQDHDDELSASTLKQVLFNTQNTCVNALIKIIDQHQPTHALTVFDSQEPCWRYQLFEGYKKGRKKMPDHLANKLIDIQDAFMEQGVDSLTSDEDEADDLIATLAVKMALHGQKVTIISTDKGFLPLLSPNIHIYDYFNRRYLDEEHVQSKFSVKTSQLIDFWTLTGDNTNKIEGVSGIGQVTAAKLLNQYGSLKAILEATDLKDSLAEKLTQSLEQMDLARKLLTLKQDIPLGFNLKDIRLTTSSSAHEINANINLTTDDKS.

Position 125 (Asp125) interacts with Mg(2+). The region spanning 181–275 is the 5'-3' exonuclease domain; sequence VKTSQLIDFW…DIRLTTSSSA (95 aa). 3 residues coordinate K(+): Leu192, Val203, and Ile206. The segment at 205–210 is interaction with DNA; sequence GIGQVT.

It belongs to the Xni family. It depends on Mg(2+) as a cofactor. The cofactor is K(+).

Functionally, has flap endonuclease activity. During DNA replication, flap endonucleases cleave the 5'-overhanging flap structure that is generated by displacement synthesis when DNA polymerase encounters the 5'-end of a downstream Okazaki fragment. This is Flap endonuclease Xni from Colwellia psychrerythraea (strain 34H / ATCC BAA-681) (Vibrio psychroerythus).